Reading from the N-terminus, the 1163-residue chain is Receptor-type guanylate cyclase gcy-21 (1163 aa).

Positions methionine 1–asparagine 17 are cleaved as a signal peptide. The Extracellular segment spans residues phenylalanine 18–threonine 490. Asparagine 102, asparagine 296, asparagine 322, asparagine 346, asparagine 466, and asparagine 488 each carry an N-linked (GlcNAc...) asparagine glycan. The helical transmembrane segment at phenylalanine 491–phenylalanine 511 threads the bilayer. Residues leucine 512–serine 1163 are Cytoplasmic-facing. Residues phenylalanine 587–threonine 882 enclose the Protein kinase domain. Residues alanine 593 to isoleucine 601 and lysine 635 contribute to the ATP site. Residues threonine 901–leucine 930 are a coiled coil. Residues threonine 953–glutamate 1083 form the Guanylate cyclase domain.

Belongs to the adenylyl cyclase class-4/guanylyl cyclase family. Expressed in ASG sensory neurons.

Its subcellular location is the cell membrane. The enzyme catalyses GTP = 3',5'-cyclic GMP + diphosphate. Its function is as follows. Guanylate cyclase involved in the production of the second messenger cGMP. Plays a role in dauer formation. The chain is Receptor-type guanylate cyclase gcy-21 from Caenorhabditis elegans.